A 468-amino-acid chain; its full sequence is Membrane-associated tyrosine- and threonine-specific cdc2-inhibitory kinase wee-1.1 (468 aa).

The segment covering 25–42 has biased composition (basic and acidic residues); the sequence is SKDEPNKLNTSRKLEVTT. Residues 25–63 form a disordered region; that stretch reads SKDEPNKLNTSRKLEVTTKKNQSNNKKRPPPINKARKSL. Residues 49-61 are compositionally biased toward basic residues; sequence NKKRPPPINKARK. Positions 106-357 constitute a Protein kinase domain; it reads FNFDKNLGKG…SELMKNHVVK (252 aa). ATP-binding positions include 112-120 and Lys-135; that span reads LGKGSFGEV. Asp-224 (proton acceptor) is an active-site residue. Residues Asn-229 and Asp-242 each coordinate Mg(2+). The disordered stretch occupies residues 425–453; that stretch reads EDEYEVFSPPRTPVKKSRYQQTMPEVSPP.

The protein belongs to the protein kinase superfamily. Ser/Thr protein kinase family. WEE1 subfamily. In the 12-13-cell embryo, expressed in the E blastomere. In the 16-cell embryo, expressed in the eight AB cells.

The protein localises to the nucleus. The catalysed reaction is L-seryl-[protein] + ATP = O-phospho-L-seryl-[protein] + ADP + H(+). The enzyme catalyses L-threonyl-[protein] + ATP = O-phospho-L-threonyl-[protein] + ADP + H(+). Functionally, acts as a negative regulator of entry into mitosis (G2 to M transition) by phosphorylation of the CDK1 kinase. The sequence is that of Membrane-associated tyrosine- and threonine-specific cdc2-inhibitory kinase wee-1.1 (wee-1.1) from Caenorhabditis elegans.